Here is a 388-residue protein sequence, read N- to C-terminus: Pepsin A-5 (388 aa).

The N-terminal stretch at 1–15 (MKWLLLLGLVALSEC) is a signal peptide. The propeptide at 16-62 (IMYKVPLIRKKSLRRTLSERGLLKDFLKKHNLNPARKYFPQWEAPTL) is activation peptide. Residues 76 to 385 (YFGTIGIGTP…DRANNQVGLA (310 aa)) form the Peptidase A1 domain. The active site involves Asp-94. Residues Cys-107 and Cys-112 are joined by a disulfide bond. Ser-130 carries the post-translational modification Phosphoserine. Cys-268 and Cys-272 are joined by a disulfide. Asp-277 is a catalytic residue. Residues Cys-311 and Cys-344 are joined by a disulfide bond.

The protein belongs to the peptidase A1 family.

Its subcellular location is the secreted. It carries out the reaction Preferential cleavage: hydrophobic, preferably aromatic, residues in P1 and P1' positions. Cleaves 1-Phe-|-Val-2, 4-Gln-|-His-5, 13-Glu-|-Ala-14, 14-Ala-|-Leu-15, 15-Leu-|-Tyr-16, 16-Tyr-|-Leu-17, 23-Gly-|-Phe-24, 24-Phe-|-Phe-25 and 25-Phe-|-Tyr-26 bonds in the B chain of insulin.. Shows particularly broad specificity; although bonds involving phenylalanine and leucine are preferred, many others are also cleaved to some extent. This Homo sapiens (Human) protein is Pepsin A-5 (PGA5).